Reading from the N-terminus, the 211-residue chain is Beta-crystallin B3 (211 aa).

The disordered stretch occupies residues M1–G21. Residues M1 to N23 are N-terminal arm. 2 consecutive Beta/gamma crystallin 'Greek key' domains span residues Y24–S63 and G64–Q108. The tract at residues I109–D113 is connecting peptide. Beta/gamma crystallin 'Greek key' domains lie at H114–N155 and G156–R198. Residues Q200–S211 form a C-terminal arm region.

The protein belongs to the beta/gamma-crystallin family. As to quaternary structure, homo/heterodimer, or complexes of higher-order. The structure of beta-crystallin oligomers seems to be stabilized through interactions between the N-terminal arms.

Crystallins are the dominant structural components of the vertebrate eye lens. The chain is Beta-crystallin B3 (CRYBB3) from Gallus gallus (Chicken).